Here is a 458-residue protein sequence, read N- to C-terminus: Protein adenylyltransferase FICD (458 aa).

The Cytoplasmic portion of the chain corresponds to 1–23 (MILMPMASVVAVAEPKWVSVWGR). A helical; Signal-anchor for type II membrane protein membrane pass occupies residues 24–44 (FLWMALLSMALGSLLALLLPL). The Lumenal portion of the chain corresponds to 45 to 458 (GVVEEHCLAV…GFKETLPVRP (414 aa)). O-AMP-threonine; by autocatalysis is present on threonine 80. 2 TPR repeats span residues 106–139 (AKAA…DPGF) and 140–173 (VDAL…SPFH). Threonine 183 carries the O-AMP-threonine; by autocatalysis modification. Residues 230–235 (TVAIEG) carry the Inhibitory (S/T)XXXE(G/N) motif motif. Glutamate 234 contacts ATP. The N-linked (GlcNAc...) asparagine glycan is linked to asparagine 275. In terms of domain architecture, Fido spans 285-420 (VTMDDMLEIH…VRPFIRFIAK (136 aa)). An ATP-binding site is contributed by 316-319 (VGHH). The active site involves histidine 363. ATP is bound by residues 367 to 374 (DGNGRTSR), 399 to 400 (YY), and asparagine 407.

Belongs to the fic family. Homodimer. Interacts with HD. Mg(2+) serves as cofactor. Requires Mn(2+) as cofactor. Auto-AMPylated in vitro.

It is found in the endoplasmic reticulum membrane. It carries out the reaction L-tyrosyl-[protein] + ATP = O-(5'-adenylyl)-L-tyrosyl-[protein] + diphosphate. It catalyses the reaction 3-O-(5'-adenylyl)-L-threonyl-[protein] + H2O = L-threonyl-[protein] + AMP + H(+). The catalysed reaction is L-threonyl-[protein] + ATP = 3-O-(5'-adenylyl)-L-threonyl-[protein] + diphosphate. Its activity is regulated as follows. The side chain of Glu-234 determines which of the two opposing activities (AMPylase or de-AMPylase) will take place. In response to endoplasmic reticulum stress, mediates de-AMPylase activity. Adenylyltransferase activity is inhibited by the inhibitory helix present at the N-terminus: Glu-234 binds ATP and competes with ATP-binding at Arg-374, thereby preventing adenylyltransferase activity. In unstressed cells, disengagement of Glu-234 promotes adenylyltransferase activity. Activation dissociates ATP-binding from Glu-234, allowing ordered binding of the entire ATP moiety with the alpha-phosphate in an orientation that is productive for accepting an incoming target hydroxyl side chain. Its function is as follows. Protein that can both mediate the addition of adenosine 5'-monophosphate (AMP) to specific residues of target proteins (AMPylation), and the removal of the same modification from target proteins (de-AMPylation), depending on the context. The side chain of Glu-231 determines which of the two opposing activities (AMPylase or de-AMPylase) will take place. Acts as a key regulator of the ERN1/IRE1-mediated unfolded protein response (UPR) by mediating AMPylation or de-AMPylation of HSPA5/BiP. In unstressed cells, acts as an adenylyltransferase by mediating AMPylation of HSPA5/BiP at 'Thr-518', thereby inactivating it. In response to endoplasmic reticulum stress, acts as a phosphodiesterase by mediating removal of ATP (de-AMPylation) from HSPA5/BiP at 'Thr-518', leading to restore HSPA5/BiP activity. Although it is able to AMPylate RhoA, Rac and Cdc42 Rho GTPases in vitro, Rho GTPases do not constitute physiological substrates. The protein is Protein adenylyltransferase FICD of Mus musculus (Mouse).